The primary structure comprises 447 residues: UDP-N-acetylmuramoylalanine--D-glutamate ligase (447 aa).

An ATP-binding site is contributed by Gly-112–Thr-118.

It belongs to the MurCDEF family.

Its subcellular location is the cytoplasm. The catalysed reaction is UDP-N-acetyl-alpha-D-muramoyl-L-alanine + D-glutamate + ATP = UDP-N-acetyl-alpha-D-muramoyl-L-alanyl-D-glutamate + ADP + phosphate + H(+). It functions in the pathway cell wall biogenesis; peptidoglycan biosynthesis. Functionally, cell wall formation. Catalyzes the addition of glutamate to the nucleotide precursor UDP-N-acetylmuramoyl-L-alanine (UMA). This Legionella pneumophila (strain Paris) protein is UDP-N-acetylmuramoylalanine--D-glutamate ligase.